Consider the following 1384-residue polypeptide: Contactin-associated protein 1 (1384 aa).

The signal sequence occupies residues 1-19 (MMHLRLFCILLAAVSGAEG). Residues 20 to 1283 (WGYYGCDEEL…PYYHDEGWVA (1264 aa)) are Extracellular-facing. Residues 25–168 (CDEELVGPLY…IGLRLGLYGC (144 aa)) enclose the F5/8 type C domain. A disulfide bridge links C25 with C168. N-linked (GlcNAc...) asparagine glycans are attached at residues N120, N128, and N276. Laminin G-like domains follow at residues 203–355 (FKTE…AFRC) and 389–538 (FRTW…FDTC). Residues C323 and C355 are joined by a disulfide bond. N420, N499, and N518 each carry an N-linked (GlcNAc...) asparagine glycan. Cystine bridges form between C506/C538, C544/C555, C549/C564, and C566/C576. Residues 540 to 577 (ITDRCSPNMCEHDGRCYQSWDDFICYCELTGYKGETCH) form the EGF-like 1 domain. The region spanning 576 to 795 (CHTPLYKESC…NTISFHTGAA (220 aa)) is the Fibrinogen C-terminal domain. Residues N597, N653, N664, N763, N804, N843, N860, N948, and N956 are each glycosylated (N-linked (GlcNAc...) asparagine). The Laminin G-like 3 domain occupies 813 to 956 (FRTSAPSGVF…ANASEGTSPN (144 aa)). 4 disulfides stabilise this stretch: C930–C957, C961–C974, C968–C983, and C985–C995. The EGF-like 2 domain occupies 957–996 (CTGHCAHPRLPCFHGGRCVERYSYYTCDCDLTAFDGPYCN). 2 N-linked (GlcNAc...) asparagine glycosylation sites follow: N1078 and N1147. Residues 1088-1250 (FSTSSAPAVL…VQGELSESNC (163 aa)) form the Laminin G-like 4 domain. C1209 and C1250 are joined by a disulfide. The chain crosses the membrane as a helical span at residues 1284-1304 (ILLGFLVAFLLLGLVGMLVLF). At 1305–1384 (YLQNHRYKGS…PQILEESRSE (80 aa)) the chain is on the cytoplasmic side. Positions 1319–1328 (EPKAAHEYHP) are enriched in basic and acidic residues. Residues 1319 to 1384 (EPKAAHEYHP…PQILEESRSE (66 aa)) are disordered. Residues 1328-1369 (PGSKPPLPTSGPAQVPTPTAAPNQAPASAPAPAPTPAPAPGP) carry the SH3-binding motif. The span at 1339 to 1355 (PAQVPTPTAAPNQAPAS) shows a compositional bias: low complexity. A compositionally biased stretch (pro residues) spans 1356–1368 (APAPAPTPAPAPG). S1383 carries the phosphoserine modification.

This sequence belongs to the neurexin family. In terms of assembly, interacts with CNTN1/contactin in cis form. In terms of tissue distribution, predominantly expressed in brain. Weak expression detected in ovary, pancreas, colon, lung, heart, intestine and testis.

The protein resides in the membrane. It is found in the cell junction. The protein localises to the paranodal septate junction. In terms of biological role, required, with CNTNAP2, for radial and longitudinal organization of myelinated axons. Plays a role in the formation of functional distinct domains critical for saltatory conduction of nerve impulses in myelinated nerve fibers. Demarcates the paranodal region of the axo-glial junction. In association with contactin involved in the signaling between axons and myelinating glial cells. This chain is Contactin-associated protein 1 (CNTNAP1), found in Homo sapiens (Human).